The sequence spans 185 residues: Ribosome-recycling factor (185 aa).

It belongs to the RRF family.

The protein resides in the cytoplasm. Functionally, responsible for the release of ribosomes from messenger RNA at the termination of protein biosynthesis. May increase the efficiency of translation by recycling ribosomes from one round of translation to another. This chain is Ribosome-recycling factor, found in Geobacillus kaustophilus (strain HTA426).